The primary structure comprises 68 residues: Movement protein TGBp3 (68 aa).

The Lumenal segment spans residues 1-6; that stretch reads MFSGKE. Residues 7–26 form a helical membrane-spanning segment; sequence ITLFALSTLIALIVLNYMSA. Over 27-68 the chain is Cytoplasmic; it reads TPNPVCLIELTGHSAVLRGNNCESLTSGVIEALSAHLHGLRN.

It belongs to the Tymovirales TGBp3 protein family.

It is found in the host endoplasmic reticulum membrane. In terms of biological role, plays a role in viral cell-to-cell propagation, by facilitating genome transport to neighboring plant cells through plasmosdesmata. May induce the formation of granular vesicles derived from the Endoplasmic reticulum, which align on actin filaments. The polypeptide is Movement protein TGBp3 (Papaya mosaic potexvirus (PMV)).